The sequence spans 152 residues: Putative pre-16S rRNA nuclease (152 aa).

The protein belongs to the YqgF nuclease family.

It localises to the cytoplasm. In terms of biological role, could be a nuclease involved in processing of the 5'-end of pre-16S rRNA. The protein is Putative pre-16S rRNA nuclease of Bifidobacterium longum (strain DJO10A).